Consider the following 318-residue polypeptide: Protoheme IX farnesyltransferase (318 aa).

Transmembrane regions (helical) follow at residues 33-53 (VMSL…VSVH), 54-74 (PFIG…SGAL), 102-122 (GEAL…LALA), 125-145 (VLAG…YTMW), 154-174 (IVIG…AATG), 181-201 (WLMF…LALF), 225-245 (VHIL…AFSN), 246-266 (IGGP…LLGA), and 288-308 (FFKL…AEAL).

Belongs to the UbiA prenyltransferase family. Protoheme IX farnesyltransferase subfamily. Interacts with CtaA.

Its subcellular location is the cell inner membrane. The catalysed reaction is heme b + (2E,6E)-farnesyl diphosphate + H2O = Fe(II)-heme o + diphosphate. It functions in the pathway porphyrin-containing compound metabolism; heme O biosynthesis; heme O from protoheme: step 1/1. Functionally, converts heme B (protoheme IX) to heme O by substitution of the vinyl group on carbon 2 of heme B porphyrin ring with a hydroxyethyl farnesyl side group. In Ruegeria pomeroyi (strain ATCC 700808 / DSM 15171 / DSS-3) (Silicibacter pomeroyi), this protein is Protoheme IX farnesyltransferase.